We begin with the raw amino-acid sequence, 139 residues long: Ribosomal RNA large subunit methyltransferase H (139 aa).

Residues Leu-56, Gly-88, and 107-112 (LSLMTF) contribute to the S-adenosyl-L-methionine site.

The protein belongs to the RNA methyltransferase RlmH family. As to quaternary structure, homodimer.

It is found in the cytoplasm. The enzyme catalyses pseudouridine(1915) in 23S rRNA + S-adenosyl-L-methionine = N(3)-methylpseudouridine(1915) in 23S rRNA + S-adenosyl-L-homocysteine + H(+). In terms of biological role, specifically methylates the pseudouridine at position 1915 (m3Psi1915) in 23S rRNA. The protein is Ribosomal RNA large subunit methyltransferase H of Coprothermobacter proteolyticus (strain ATCC 35245 / DSM 5265 / OCM 4 / BT).